The sequence spans 549 residues: MQADFVIIGSGSAGSALAYRLSEDGRNSVIVLEFGGSDVGPFIQMPAALAWPMSMNRYNWGYLSEPEPNLNNRRITAPRGKVIGGSSSINGMVYVRGHSEDFNRWEELGAQGWAYADVLPYYKRMEHSHGGEEGWRGTDGPLHVQRGPVKNPLFHAFIEAGKEAGFEVTEDYNGSKQEGFGLMEQTTWRGRRWSAASAYLRPALKRPNVELIRCFARKIVIENGRATGVEIERGGRIEVVKANREVIVSASSFNSPKLLMLSGIGPAAHLKEMGIDVKVDRPGVGQNLQDHMEFYFQQVSTKPVSLYSWLPWFWQGVAGAQWLFFKRGLGISNQFESCAFLRSAPGVKQPDIQYHFLPVAISYDGKAAAKSHGFQVHVGYNLSKSRGNVSLRSSDPKADPVIRFNYMSHPEDWEKFRHCVRLTREIFGQKAFDLYRGPEIQPGEKVQTDEEIDGFLREHLESAYHPCGTCKMGAKDDPMAVVDPETRVIGVDGLRVADSSIFPHITYGNLNAPSIMTGEKSADHILGRQPLARSNQEPWINPRWAVSDR.

An FAD-binding site is contributed by 4–33 (DFVIIGSGSAGSALAYRLSEDGRNSVIVLE). Histidine 465 serves as the catalytic Proton acceptor.

The protein belongs to the GMC oxidoreductase family. FAD serves as cofactor.

It is found in the cell membrane. The catalysed reaction is choline + A = betaine aldehyde + AH2. The enzyme catalyses betaine aldehyde + NAD(+) + H2O = glycine betaine + NADH + 2 H(+). The protein operates within amine and polyamine biosynthesis; betaine biosynthesis via choline pathway; betaine aldehyde from choline (cytochrome c reductase route): step 1/1. Its function is as follows. Involved in the biosynthesis of the osmoprotectant glycine betaine. Catalyzes the oxidation of choline to betaine aldehyde and betaine aldehyde to glycine betaine at the same rate. In Rhizobium meliloti (strain 1021) (Ensifer meliloti), this protein is Oxygen-dependent choline dehydrogenase.